Here is a 703-residue protein sequence, read N- to C-terminus: Calcium-responsive transcription factor (703 aa).

3 disordered regions span residues 1–61 (MEQS…QNIP), 130–150 (GPLV…SDRN), and 517–539 (GNSQ…SLSP). Residues 9-22 (KVNHNDSEESKTDS) show a composition bias toward basic and acidic residues. Residues 23–34 (QHLTYMDSSEPS) show a composition bias toward polar residues.

It localises to the nucleus. In terms of biological role, acts as a transcriptional activator that mediates the calcium- and neuron-selective induction of BDNF exon III transcription. Binds to the consensus calcium-response element CaRE1 5'-CTATTTCGAG-3' sequence. The chain is Calcium-responsive transcription factor (CARF) from Bos taurus (Bovine).